Here is a 365-residue protein sequence, read N- to C-terminus: Transcription factor KUA1 (365 aa).

Residues 1–21 form a disordered region; it reads MTRRCSHCNHNGHNSRTCPNR. A CCHC-type zinc finger spans residues 3–20; it reads RRCSHCNHNGHNSRTCPN. The span at 8 to 18 shows a compositional bias: polar residues; it reads CNHNGHNSRTC. The short motif at 24-28 is the R/KLFGV (transcriptional repression) element; the sequence is KLFGV. The segment at 41-99 is disordered; sequence MGNLSHYTGSGSGGHGTGSNTPGSPGDVPDHVAGDGYASEDFVAGSSSSRERKKGTPWT. One can recognise an HTH myb-type domain in the interval 90–146; sequence RERKKGTPWTEEEHRMFLLGLQKLGKGDWRGISRNYVTTRTPTQVASHAQKYFIRQS. The segment at residues 118 to 142 is a DNA-binding region (H-T-H motif); the sequence is WRGISRNYVTTRTPTQVASHAQKYF. 2 disordered regions span residues 214–254 and 321–365; these read SMDS…QPQL and ESNK…IHAL. The segment covering 220–254 has biased composition (low complexity); that stretch reads STTGEPTATAAAASSSSRLEETTQLQSQLQPQPQL. Positions 343-355 are enriched in polar residues; it reads RQSAFHPNPSSDS.

In terms of tissue distribution, expressed ubiquitously, except in hypocotyls, root tips and lateral root primordia.

It is found in the nucleus. In terms of biological role, transcriptional repressor. Direct regulator of the transcription of peroxidase (Prxs) and reactive oxygen species (ROS)-related genes via the recognition of 5'-ATCACA-3' motif. Binds to 5'-TATCCA-3' motif (TA box) and represses the activity of corresponding promoters (e.g. sugar response genes). Regulates hypocotyl elongation in response to darkness by enhancing auxin accumulation in a phytochrome-interacting factor (PIF) proteins-dependent manner. Promotes lateral roots formation. Promotes cell expansion during leaves development via the modulation of cell wall-located Prxs. Plays a critical role in developmentally regulated and dark-induced onset of leaf senescence by repressing the transcription of several genes involved in chloroplast function and responses to light and auxin. Promotes responses to auxin, abscisic acid (ABA), and ethylene. This is Transcription factor KUA1 from Arabidopsis thaliana (Mouse-ear cress).